A 238-amino-acid polypeptide reads, in one-letter code: CD63 antigen (238 aa).

At 1 to 11 (MAVEGGMKCVK) the chain is on the cytoplasmic side. The helical transmembrane segment at 12–32 (FLLYVLLLAFCACAVGLIAIG) threads the bilayer. Residues 33–51 (VAVQVVLKQAITHETTAGS) are Extracellular-facing. The chain crosses the membrane as a helical span at residues 52-72 (LLPVVIIAVGAFLFLVAFVGC). Over 73-81 (CGACKENYC) the chain is Cytoplasmic. The chain crosses the membrane as a helical span at residues 82–102 (LMITFAIFLSLIMLVEVAVAI). At 103–203 (AGYVFRDQVK…TIAIWLRKNI (101 aa)) the chain is on the extracellular side. 4 N-linked (GlcNAc...) asparagine glycosylation sites follow: asparagine 116, asparagine 130, asparagine 150, and asparagine 172. The chain crosses the membrane as a helical span at residues 204 to 224 (LLVAAAALGIAFVEVLGIIFS). At 225–238 (CCLVKSIRSGYEVM) the chain is on the cytoplasmic side. The short motif at 234–238 (GYEVM) is the Lysosomal targeting motif element.

The protein belongs to the tetraspanin (TM4SF) family. Interacts with TIMP1 and ITGB1 and recruits TIMP1 to ITGB1. Interacts with CD9. Identified in a complex with CD9 and ITGB3. Interacts with PMEL. Interacts with KDR/VEGFR2; identified in a complex with ITGB1 and KDR/VEGFR2 and is required to recruit KDR to ITGB1 complexes. Interacts with SYT7. Palmitoylated at a low, basal level in unstimulated platelets. The level of palmitoylation increases when platelets are activated by thrombin (in vitro). Ubiquitous. Strongly expressed in kidney. Detected in spleen, bone marrow, peripheral blood mononuclear cells and macrophages.

Its subcellular location is the cell membrane. The protein resides in the lysosome membrane. It localises to the late endosome membrane. The protein localises to the endosome. It is found in the multivesicular body. Its subcellular location is the melanosome. The protein resides in the secreted. It localises to the extracellular exosome. The protein localises to the cell surface. Functions as a cell surface receptor for TIMP1 and plays a role in the activation of cellular signaling cascades. Plays a role in the activation of ITGB1 and integrin signaling, leading to the activation of AKT, FAK/PTK2 and MAP kinases. Promotes cell survival, reorganization of the actin cytoskeleton, cell adhesion, spreading and migration, via its role in the activation of AKT and FAK/PTK2. Plays a role in VEGFA signaling via its role in regulating the internalization of KDR/VEGFR2. Plays a role in intracellular vesicular transport processes, and is required for normal trafficking of the PMEL luminal domain that is essential for the development and maturation of melanocytes. Plays a role in the adhesion of leukocytes onto endothelial cells via its role in the regulation of SELP trafficking. May play a role in mast cell degranulation in response to Ms4a2/FceRI stimulation, but not in mast cell degranulation in response to other stimuli. In Mus musculus (Mouse), this protein is CD63 antigen (Cd63).